The following is a 412-amino-acid chain: Putative oxidoreductase bli-4, mitochondrial (412 aa).

Residues 1–55 (MSTKLCQRIARTATLSPTSLVPRSSRLIPIVSSAAVRPSSAIPTRRPFSTTESRY) constitute a mitochondrion transit peptide. Ile108, Asn120, Asn186, Tyr269, Lys273, Val308, Thr310, and Gln312 together coordinate NADP(+). The active-site Proton donor is Tyr269. Lys273 functions as the Lowers pKa of active site Tyr in the catalytic mechanism.

Belongs to the short-chain dehydrogenases/reductases (SDR) family.

It is found in the mitochondrion. Its function is as follows. May play a role as an NAD-dependent dehydrogenase in the mitochondria. This chain is Putative oxidoreductase bli-4, mitochondrial (bli-4), found in Neurospora crassa (strain ATCC 24698 / 74-OR23-1A / CBS 708.71 / DSM 1257 / FGSC 987).